We begin with the raw amino-acid sequence, 360 residues long: MDPEETSVYLDYYYATSPNSDIRETHSHVPYTSVFLPVFYTAVFLTGVLGNLVLMGALHFKPGSRRLIDIFIINLAASDFIFLVTLPLWVDKEASLGLWRTGSFLCKGSSYMISVNMHCSVLLLTCMSVDRYLAIVWPVVSRKFRRTDCAYVVCASIWFISCLLGLPTLLSRELTLIDDKPYCAEKKATPIKLIWSLVALIFTFFVPLLSIVTCYCCIARKLCAHYQQSGKHNKKLKKSIKIIFIVVAAFLVSWLPFNTFKFLAIVSGLRQEHYLPSAILQLGMEVSGPLAFANSCVNPFIYYIFDSYIRRAIVHCLCPCLKNYDFGSSTETSDSHLTKALSTFIHAEDFARRRKRSVSL.

Residues 1-33 (MDPEETSVYLDYYYATSPNSDIRETHSHVPYTS) lie on the Extracellular side of the membrane. Residues 34 to 54 (VFLPVFYTAVFLTGVLGNLVL) traverse the membrane as a helical segment. Over 55 to 69 (MGALHFKPGSRRLID) the chain is Cytoplasmic. A helical membrane pass occupies residues 70-90 (IFIINLAASDFIFLVTLPLWV). Topologically, residues 91 to 120 (DKEASLGLWRTGSFLCKGSSYMISVNMHCS) are extracellular. A helical transmembrane segment spans residues 121 to 141 (VLLLTCMSVDRYLAIVWPVVS). Residues 142 to 149 (RKFRRTDC) are Cytoplasmic-facing. The chain crosses the membrane as a helical span at residues 150 to 170 (AYVVCASIWFISCLLGLPTLL). Residues 171 to 192 (SRELTLIDDKPYCAEKKATPIK) are Extracellular-facing. A helical membrane pass occupies residues 193 to 213 (LIWSLVALIFTFFVPLLSIVT). Residues 214–239 (CYCCIARKLCAHYQQSGKHNKKLKKS) are Cytoplasmic-facing. A helical transmembrane segment spans residues 240–260 (IKIIFIVVAAFLVSWLPFNTF). Topologically, residues 261-284 (KFLAIVSGLRQEHYLPSAILQLGM) are extracellular. A helical membrane pass occupies residues 285–305 (EVSGPLAFANSCVNPFIYYIF). At 306–360 (DSYIRRAIVHCLCPCLKNYDFGSSTETSDSHLTKALSTFIHAEDFARRRKRSVSL) the chain is on the cytoplasmic side. Serine 359 is modified (phosphoserine).

Belongs to the G-protein coupled receptor 1 family. Interacts with adapter YWHAE; this interaction promotes ER-to-Golgi transport of GPR15. Interacts with GNAI1; this interaction initiates the signaling pathway. Post-translationally, phosphorylation is necessary for YWHAE binding and efficient surface expression. In terms of processing, O-glycosylated. Sialylated O-glycans in the N-terminal tail inhibits binding of GPR15LG. Sulfation is required for efficient binding of GPR15LG. As to expression, highly expressed in lymphoid tissues, including macrophages and peripheral blood mononuclear cells.

It localises to the cell membrane. G protein-coupled receptor that plays an important role in immune homeostasis. Acts via its natural ligand GPR15LG, a chemokine-like polypeptide strongly expressed in gastrointestinal tissues. GPR15-GPR15LG signaling axis regulates intestinal homeostasis and inflammation through the migration of immune cells. Controls thereby the specific homing of T-cells, particularly FOXP3+ regulatory T-cells (Tregs), to the large intestine lamina propria. Also required for skin localization of thymus-derived dendritic epidermal T-cells. Plays an important role in mediating cytoprotective function as well as angiogenesis of thrombomodulin. Mechanistically, preferentially signals through the Gi/o pathway to inhibit adenylate cyclase activity and activate a phosphatidylinositol-calcium second messenger system that regulates the release of Ca(2+) ions from intracellular stores. Functionally, (Microbial infection) Acts as an alternative coreceptor with CD4 for HIV-1 infection. The chain is G-protein coupled receptor 15 (GPR15) from Homo sapiens (Human).